A 356-amino-acid polypeptide reads, in one-letter code: GTPase Obg (356 aa).

The Obg domain maps to M1–L159. The region spanning A160–E331 is the OBG-type G domain. GTP contacts are provided by residues G166 to S173, F191 to V195, D213 to G216, S283 to D286, and S312 to V314. 2 residues coordinate Mg(2+): S173 and T193.

Belongs to the TRAFAC class OBG-HflX-like GTPase superfamily. OBG GTPase family. In terms of assembly, monomer. Mg(2+) serves as cofactor.

Its subcellular location is the cytoplasm. In terms of biological role, an essential GTPase which binds GTP, GDP and possibly (p)ppGpp with moderate affinity, with high nucleotide exchange rates and a fairly low GTP hydrolysis rate. Plays a role in control of the cell cycle, stress response, ribosome biogenesis and in those bacteria that undergo differentiation, in morphogenesis control. The sequence is that of GTPase Obg from Syntrophotalea carbinolica (strain DSM 2380 / NBRC 103641 / GraBd1) (Pelobacter carbinolicus).